The sequence spans 1166 residues: Poly [ADP-ribose] polymerase tankyrase-2 (1166 aa).

ANK repeat units follow at residues proline 23–arginine 52, arginine 57–alanine 86, glycine 90–alanine 119, and tryptophan 123–isoleucine 152. At asparagine 203 the chain carries (3S)-3-hydroxyasparagine; by HIF1AN. ANK repeat units follow at residues arginine 210–alanine 239, glycine 243–alanine 272, tryptophan 276–leucine 305, threonine 363–glutamate 395, glutamate 399–alanine 428, leucine 432–isoleucine 461, and serine 463–histidine 489. Histidine 238 bears the (3S)-3-hydroxyhistidine; by HIF1AN mark. A (3S)-3-hydroxyasparagine; by HIF1AN modification is found at asparagine 271. Position 427 is a (3S)-3-hydroxyasparagine; by HIF1AN (asparagine 427). Asparagine 518 is subject to (3S)-3-hydroxyasparagine; by HIF1AN. ANK repeat units follow at residues arginine 525–alanine 554, glycine 558–valine 587, tryptophan 591–lysine 620, and aspartate 624–alanine 652. The tract at residues leucine 545–histidine 553 is HIF1AN-binding. The residue at position 553 (histidine 553) is a (3S)-3-hydroxyhistidine; by HIF1AN. Asparagine 586 is subject to (3S)-3-hydroxyasparagine; by HIF1AN. Asparagine 671, asparagine 706, and asparagine 739 each carry (3S)-3-hydroxyasparagine; by HIF1AN. ANK repeat units follow at residues arginine 678–alanine 707, glycine 711–alanine 740, and tryptophan 744–leucine 773. The SAM domain occupies glycine 873–glycine 936. The PARP catalytic domain maps to serine 959–valine 1164. Cysteine 1081, histidine 1084, cysteine 1089, and cysteine 1092 together coordinate Zn(2+).

Belongs to the ARTD/PARP family. In terms of assembly, oligomerizes and associates with TNKS. Interacts with the cytoplasmic domain of LNPEP/Otase in SLC2A4/GLUT4-vesicles. Binds to the N-terminus of Grb14 and TRF1 with its ankyrin repeat region. Interacts with HIF1AN. Interacts with RNF146; this interaction leads to ubiquitination and proteasomal degradation. Interacts with NUMA1. Post-translationally, ubiquitinated by RNF146 when auto-poly-ADP-ribosylated, leading to its degradation. Deubiquitinated by USP25; leading to stabilization. In terms of processing, ADP-ribosylated (-auto). Poly-ADP-ribosylated protein is recognized by RNF146, followed by ubiquitination.

Its subcellular location is the cytoplasm. The protein resides in the golgi apparatus membrane. It localises to the nucleus. The protein localises to the chromosome. It is found in the telomere. It catalyses the reaction NAD(+) + (ADP-D-ribosyl)n-acceptor = nicotinamide + (ADP-D-ribosyl)n+1-acceptor + H(+).. The enzyme catalyses L-aspartyl-[protein] + NAD(+) = 4-O-(ADP-D-ribosyl)-L-aspartyl-[protein] + nicotinamide. The catalysed reaction is L-glutamyl-[protein] + NAD(+) = 5-O-(ADP-D-ribosyl)-L-glutamyl-[protein] + nicotinamide. Poly-ADP-ribosyltransferase involved in various processes such as Wnt signaling pathway, telomere length and vesicle trafficking. Acts as an activator of the Wnt signaling pathway by mediating poly-ADP-ribosylation of AXIN1 and AXIN2, 2 key components of the beta-catenin destruction complex: poly-ADP-ribosylated target proteins are recognized by RNF146, which mediates their ubiquitination and subsequent degradation. Also mediates poly-ADP-ribosylation of BLZF1 and CASC3, followed by recruitment of RNF146 and subsequent ubiquitination. Mediates poly-ADP-ribosylation of TERF1, thereby contributing to the regulation of telomere length. Stimulates 26S proteasome activity. This chain is Poly [ADP-ribose] polymerase tankyrase-2, found in Mus musculus (Mouse).